A 225-amino-acid chain; its full sequence is Immune-associated nucleotide-binding protein 1 (225 aa).

Residues 6–214 (CPVTNLLLLG…YTENMHRKIK (209 aa)) enclose the AIG1-type G domain. A G1 region spans residues 15-22 (GRSENGKS). 15–23 (GRSENGKSS) is a GTP binding site. The tract at residues 42–46 (DMDQR) is G2. A G3 region spans residues 64-67 (DTPG). The segment at 134 to 137 (TGGD) is G4. Residues 173–175 (NNK) form a G5 region. Asparagine 174 is a GTP binding site.

The protein belongs to the TRAFAC class TrmE-Era-EngA-EngB-Septin-like GTPase superfamily. AIG1/Toc34/Toc159-like paraseptin GTPase family. IAN subfamily. Mostly expressed in pollen.

The polypeptide is Immune-associated nucleotide-binding protein 1 (Arabidopsis thaliana (Mouse-ear cress)).